An 81-amino-acid polypeptide reads, in one-letter code: ATP synthase subunit C, plastid (81 aa).

Transmembrane regions (helical) follow at residues 3–23 (PIISAASVIAAGFAVGLASIG) and 57–77 (LAFMEALTIYGLVVALALLFA).

Belongs to the ATPase C chain family. In terms of assembly, F-type ATPases have 2 components, F(1) - the catalytic core - and F(0) - the membrane proton channel. F(1) has five subunits: alpha(3), beta(3), gamma(1), delta(1), epsilon(1). F(0) has four main subunits: a(1), b(1), b'(1) and c(10-14). The alpha and beta chains form an alternating ring which encloses part of the gamma chain. F(1) is attached to F(0) by a central stalk formed by the gamma and epsilon chains, while a peripheral stalk is formed by the delta, b and b' chains.

It is found in the plastid membrane. F(1)F(0) ATP synthase produces ATP from ADP in the presence of a proton or sodium gradient. F-type ATPases consist of two structural domains, F(1) containing the extramembraneous catalytic core and F(0) containing the membrane proton channel, linked together by a central stalk and a peripheral stalk. During catalysis, ATP synthesis in the catalytic domain of F(1) is coupled via a rotary mechanism of the central stalk subunits to proton translocation. In terms of biological role, key component of the F(0) channel; it plays a direct role in translocation across the membrane. A homomeric c-ring of between 10-14 subunits forms the central stalk rotor element with the F(1) delta and epsilon subunits. The sequence is that of ATP synthase subunit C, plastid from Cuscuta gronovii (Common dodder).